We begin with the raw amino-acid sequence, 259 residues long: 3'-5' ssDNA/RNA exonuclease TatD (259 aa).

3 residues coordinate a divalent metal cation: E92, H128, and H153.

It belongs to the metallo-dependent hydrolases superfamily. TatD-type hydrolase family. TatD subfamily. In terms of assembly, monomer. It depends on Mg(2+) as a cofactor.

The protein resides in the cytoplasm. In terms of biological role, 3'-5' exonuclease that prefers single-stranded DNA and RNA. May play a role in the H(2)O(2)-induced DNA damage repair. This chain is 3'-5' ssDNA/RNA exonuclease TatD, found in Erwinia amylovora (strain ATCC 49946 / CCPPB 0273 / Ea273 / 27-3).